Here is a 473-residue protein sequence, read N- to C-terminus: Knob-associated histidine-rich protein (473 aa).

Residues 1–34 (MKSFKNKNTLRRKKAFPVFTKILLVSFLVWVLKC) form the signal peptide. N-linked (GlcNAc...) asparagine glycosylation is present at Asn-42. The span at 57–87 (AQKQHEHHHHHHHQHQHQHQAPHQAHHHHHH) shows a compositional bias: basic residues. Disordered stretches follow at residues 57–143 (AQKQ…QVFR) and 347–473 (SSVN…DGSK). Residues 95–104 (PQVHQQVHGQ) show a composition bias toward low complexity. Residues 108–117 (HHHHHHHHHQ) show a composition bias toward basic residues. 2 stretches are compositionally biased toward basic and acidic residues: residues 354 to 375 (KHGD…EGEK) and 396 to 405 (KDNEDAESVK). Over residues 406 to 422 (SKKHKSHDCEKKKSKKH) the composition is skewed to basic residues. Basic and acidic residues-rich tracts occupy residues 423–444 (KDNE…GEKH) and 453–473 (KTNE…DGSK).

The protein localises to the secreted. In terms of biological role, KAHRP might mimick human histidine-rich glycoproteins to anchor host thrombospondin or a parasite analog in a binding complex with the endothelial cell receptor. This Plasmodium falciparum protein is Knob-associated histidine-rich protein.